Reading from the N-terminus, the 154-residue chain is Anti-sigma-E factor RseA (154 aa).

T39 bears the Phosphothreonine; by PknB mark. 3 residues coordinate Zn(2+): H66, C70, and C73. Positions 104–154 (SEIPRCPPEGPSKGSSGGSSQGPPDGAAAGFGDRFADGDGGNRGRQSRVRR) are disordered. A compositionally biased stretch (low complexity) spans 124-136 (QGPPDGAAAGFGD).

This sequence belongs to the zinc-associated anti-sigma factor (ZAS) superfamily. As to quaternary structure, interacts with cognate ECF RNA polymerase sigma factor SigE under reducing conditions; this inhibits the interaction of SigE with the RNA polymerase catalytic core. The cofactor is Zn(2+). Phosphorylated by PknB on Thr-39; can be dephosphorylated (at least in vitro) by PstP. Phosphorylation is the signal for subsequent degradation by the ClpC1-ClpP2 complex. Post-translationally, degraded following vancomycin treatment (surface stress) by a ClpC1-ClpP2 complex.

Its subcellular location is the cytoplasm. Its function is as follows. An anti-sigma factor for extracytoplasmic function (ECF) sigma factor SigE. ECF sigma factors are held in an inactive form by an anti-sigma factor. The polypeptide is Anti-sigma-E factor RseA (rseA) (Mycobacterium tuberculosis (strain ATCC 25618 / H37Rv)).